The chain runs to 351 residues: Putative [LysW]-L-2-aminoadipate/[LysW]-L-glutamate phosphate reductase (351 aa).

NADP(+) contacts are provided by residues Ser-10–Thr-13 and Ser-34–Lys-36. The active site involves Cys-151. Asn-318 contributes to the NADP(+) binding site.

The protein belongs to the NAGSA dehydrogenase family. Type 1 subfamily. LysY sub-subfamily.

The protein localises to the cytoplasm. The enzyme catalyses [amino-group carrier protein]-C-terminal-N-(1-carboxy-5-oxopentan-1-yl)-L-glutamine + phosphate + NADP(+) = [amino-group carrier protein]-C-terminal-N-(1-carboxy-5-phosphooxy-5-oxopentan-1-yl)-L-glutamine + NADPH + H(+). It catalyses the reaction [amino-group carrier protein]-C-terminal-gamma-(L-glutamyl-5-semialdehyde)-L-glutamate + phosphate + NADP(+) = [amino-group carrier protein]-C-terminal-gamma-(5-phospho-L-glutamyl)-L-glutamate + NADPH + H(+). It participates in amino-acid biosynthesis; L-lysine biosynthesis via AAA pathway; L-lysine from L-alpha-aminoadipate (Thermus route): step 3/5. The protein operates within amino-acid biosynthesis; L-arginine biosynthesis. Involved in both the arginine and lysine biosynthetic pathways. The chain is Putative [LysW]-L-2-aminoadipate/[LysW]-L-glutamate phosphate reductase from Pyrobaculum calidifontis (strain DSM 21063 / JCM 11548 / VA1).